The sequence spans 212 residues: Phosphoenolpyruvate guanylyltransferase (212 aa).

Phosphoenolpyruvate-binding residues include T139, G155, and S158.

This sequence belongs to the CofC family.

It catalyses the reaction phosphoenolpyruvate + GTP + H(+) = enolpyruvoyl-2-diphospho-5'-guanosine + diphosphate. It participates in cofactor biosynthesis; coenzyme F420 biosynthesis. Its function is as follows. Guanylyltransferase that catalyzes the activation of phosphoenolpyruvate (PEP) as enolpyruvoyl-2-diphospho-5'-guanosine, via the condensation of PEP with GTP. It is involved in the biosynthesis of coenzyme F420, a hydride carrier cofactor. The chain is Phosphoenolpyruvate guanylyltransferase from Streptomyces coelicolor (strain ATCC BAA-471 / A3(2) / M145).